We begin with the raw amino-acid sequence, 269 residues long: Imidazole glycerol phosphate synthase subunit HisF (269 aa).

Residues Asp23 and Asp142 contribute to the active site.

The protein belongs to the HisA/HisF family. In terms of assembly, heterodimer of HisH and HisF.

The protein resides in the cytoplasm. It carries out the reaction 5-[(5-phospho-1-deoxy-D-ribulos-1-ylimino)methylamino]-1-(5-phospho-beta-D-ribosyl)imidazole-4-carboxamide + L-glutamine = D-erythro-1-(imidazol-4-yl)glycerol 3-phosphate + 5-amino-1-(5-phospho-beta-D-ribosyl)imidazole-4-carboxamide + L-glutamate + H(+). It functions in the pathway amino-acid biosynthesis; L-histidine biosynthesis; L-histidine from 5-phospho-alpha-D-ribose 1-diphosphate: step 5/9. Functionally, IGPS catalyzes the conversion of PRFAR and glutamine to IGP, AICAR and glutamate. The HisF subunit catalyzes the cyclization activity that produces IGP and AICAR from PRFAR using the ammonia provided by the HisH subunit. This Bordetella parapertussis (strain 12822 / ATCC BAA-587 / NCTC 13253) protein is Imidazole glycerol phosphate synthase subunit HisF.